The chain runs to 1014 residues: Nebulette (1014 aa).

The segment at 1 to 24 (MRVPVFEDIKDETEEEKIGEEENE) is disordered. The span at 9-24 (IKDETEEEKIGEEENE) shows a compositional bias: acidic residues. 23 Nebulin repeats span residues 29–63 (FYKPVIEDLSMELARKCTELISDIRYKEEFKKSKD), 64–99 (KCTFVTDSPMLNHVKNIGAFISEAKYKGTIKADLSN), 100–136 (SLYKRMPATIDSVFAGEVTQLQSEVAYKQKHDAAKGF), 137–172 (SDYAHMKEPPEVKHAMEVNKHQSNISYRKDVQDTHT), 173–205 (YSAELDRPDIKMATQISKIISNAEYKKGQGIMN), 206–241 (KEPAVIGRPDFEHAVEASKLSSQIKYKEKFDNEMKD), 242–278 (KKHHYNPLESASFRQNQLAATLASNVKYKKDIQNMHD), 279–313 (PVSDLPNLLFLDHVLKASKMLSGREYKKLFEENKG), 314–348 (MYHFDADAVEHLHHKGNAVLQSQVKYKEEYEKNKG), 349–385 (KPMLEFVETPSYQASKEAQKMQSEKVYKEDFEKEIKG), 386–422 (RSSLDLDKTPEFLHVKYITNLLREKEYKKDLENEIKG), 423–459 (KGMELNSEVLDIQRAKRASEMASEKEYKKDLESIIKG), 460–496 (KGMQAGTDTLEMQHAKKAAEIASEKDYKRDLETEIKG), 497–533 (KGMQVSTDTLDVQRAKKASEMASQKQYKKDLENEIKG), 534–569 (KGMQVSMDIPDILRAKRTSEIYSQRKYKDEAEKMLS), 570–599 (NYSTIADTPEIQRIKTTQQNISAVFYKKEV), 600–635 (GAGTAVKDSPEIERVKKNQQNISSVKYKEEIKHATA), 636–666 (ISDPPELKRVKENQKNISNLQYKEQNYKATP), 667–693 (VSMTPEIERVRRNQEQLSAVKYKGELQ), 694–728 (RGTAISDPPELKRAKENQKNISNVYYRGQLGRATT), 729–759 (LSVTPEMERVKKNQENISSVKYTQDHKQMKG), 760–794 (RPSLILDTPAMRHVKEAQNHISMVKYHEDFEKTKG), and 795–830 (RGFTPVVDDPVTERVRKNTQVVSDAAYKGVHPHIVE). An Omega-N-methylarginine modification is found at Asp-96. Arg-795 bears the Omega-N-methylarginine mark. Residues 836 to 953 (GIIVDLKVWR…VSSMRSMQHS (118 aa)) are linker. The 61-residue stretch at 954–1014 (PNLRTYRAMY…LPANYIEFVN (61 aa)) folds into the SH3 domain.

Interacts (via nebulin repeats 1-5) with DESM (via rod region). Interacts (via SH3 domain) with XIRP2. As to quaternary structure, interacts with ZYX/Zyxin. In terms of tissue distribution, abundantly expressed in cardiac muscle, but not in skeletal or smooth muscle. Localized to Z-lines in cardiac cells and to dense bodies in nonmuscle cells. Isoform 2 is expressed in non-muscle cells such as in fibroblasts.

The protein localises to the cytoplasm. Its function is as follows. Binds to actin and plays an important role in the assembly of the Z-disk. May functionally link sarcomeric actin to the desmin intermediate filaments in the heart muscle sarcomeres. Functionally, may play a role in the assembly of focal adhesions. This is Nebulette from Homo sapiens (Human).